The chain runs to 538 residues: Cytochrome P450 734A4 (538 aa).

Residues 5-27 (VAVAAAVLLLLHVAARVADAVWW) form a helical membrane-spanning segment. A heme-binding site is contributed by C480.

Belongs to the cytochrome P450 family. Requires heme as cofactor. Expressed in roots, shoot apex, leaf sheaths, leaf blades, internodes and panicles.

The protein localises to the membrane. Functionally, cytochrome P450 involved in brassinosteroids (BRs) inactivation and regulation of BRs homeostasis. Is a multifunctional and multisubstrate enzyme that controls the endogenous bioactive BR content both by direct inactivation of castasterone (CS) and by decreasing the levels of BR precursors. Catalyzes the oxidation of carbon 22 hydroxylated BR intermediates to produce C26 oxidized metabolites. The chain is Cytochrome P450 734A4 (CYP734A4) from Oryza sativa subsp. japonica (Rice).